The primary structure comprises 278 residues: 4-diphosphocytidyl-2-C-methyl-D-erythritol kinase (278 aa).

The active site involves Lys-9. 89-99 (PVASGIGGGSA) lines the ATP pocket. Asp-128 is an active-site residue.

The protein belongs to the GHMP kinase family. IspE subfamily.

It catalyses the reaction 4-CDP-2-C-methyl-D-erythritol + ATP = 4-CDP-2-C-methyl-D-erythritol 2-phosphate + ADP + H(+). The protein operates within isoprenoid biosynthesis; isopentenyl diphosphate biosynthesis via DXP pathway; isopentenyl diphosphate from 1-deoxy-D-xylulose 5-phosphate: step 3/6. Its function is as follows. Catalyzes the phosphorylation of the position 2 hydroxy group of 4-diphosphocytidyl-2C-methyl-D-erythritol. The sequence is that of 4-diphosphocytidyl-2-C-methyl-D-erythritol kinase from Cereibacter sphaeroides (strain ATCC 17025 / ATH 2.4.3) (Rhodobacter sphaeroides).